A 317-amino-acid chain; its full sequence is Cytochrome f (317 aa).

The signal sequence occupies residues 1-31 (MIFKPQSFLKAIVLSMTITFAFNMSAPIASA). Heme-binding residues include Tyr-32, Cys-52, Cys-55, and His-56. Residues 280 to 302 (PVRIQGLLAFFACILLAQILLVV) traverse the membrane as a helical segment.

It belongs to the cytochrome f family. The 4 large subunits of the cytochrome b6-f complex are cytochrome b6, subunit IV (17 kDa polypeptide, petD), cytochrome f and the Rieske protein, while the 4 small subunits are PetG, PetL, PetM and PetN. The complex functions as a dimer. It depends on heme as a cofactor.

Its subcellular location is the plastid. The protein resides in the chloroplast thylakoid membrane. Functionally, component of the cytochrome b6-f complex, which mediates electron transfer between photosystem II (PSII) and photosystem I (PSI), cyclic electron flow around PSI, and state transitions. In Chlamydomonas subcaudata, this protein is Cytochrome f.